The primary structure comprises 121 residues: Large ribosomal subunit protein uL14c (121 aa).

The protein belongs to the universal ribosomal protein uL14 family. As to quaternary structure, part of the 50S ribosomal subunit.

It localises to the plastid. It is found in the chloroplast. Its function is as follows. Binds to 23S rRNA. In Nephroselmis olivacea (Green alga), this protein is Large ribosomal subunit protein uL14c.